The sequence spans 87 residues: Beta-toxin Ct1a (87 aa).

A signal peptide spans 1-19 (MNSLLMITACLALIGTVWA). The region spanning 20–85 (KEGYLVNHST…VWPLPKKTCN (66 aa)) is the LCN-type CS-alpha/beta domain. 4 cysteine pairs are disulfide-bonded: C31-C84, C35-C60, C44-C65, and C48-C67. N85 is modified (asparagine amide).

It belongs to the long (4 C-C) scorpion toxin superfamily. Sodium channel inhibitor family. Beta subfamily. In terms of tissue distribution, expressed by the venom gland.

The protein resides in the secreted. Functionally, beta toxins bind voltage-independently at site-4 of sodium channels (Nav) and shift the voltage of activation toward more negative potentials thereby affecting sodium channel activation and promoting spontaneous and repetitive firing. Is lethal to mice but does not show toxicity to freshwater shrimp and crickets. The polypeptide is Beta-toxin Ct1a (Centruroides tecomanus (Scorpion)).